The sequence spans 282 residues: Nucleotide-binding protein Shew_3314 (282 aa).

Position 8 to 15 (8 to 15 (GRSGSGKS)) interacts with ATP. 56–59 (DVRN) contacts GTP.

The protein belongs to the RapZ-like family.

In terms of biological role, displays ATPase and GTPase activities. The protein is Nucleotide-binding protein Shew_3314 of Shewanella loihica (strain ATCC BAA-1088 / PV-4).